We begin with the raw amino-acid sequence, 65 residues long: Conotoxin VnMLCL-031 (65 aa).

The signal sequence occupies residues 1-19 (MLCLPXFIILLLLASPAAP). A propeptide spanning residues 20-43 (NPLQTRXQSNLIRAGPEDANIKTX) is cleaved from the precursor. Ile-64 carries the isoleucine amide modification.

The protein belongs to the conotoxin T superfamily. As to expression, expressed by the venom duct.

Its subcellular location is the secreted. The polypeptide is Conotoxin VnMLCL-031 (Conus ventricosus (Mediterranean cone)).